Reading from the N-terminus, the 119-residue chain is uncharacterized protein (119 aa).

3 helical membrane-spanning segments follow: residues 28–48, 55–75, and 80–100; these read AWTT…HLVF, IEVV…NLAI, and PIGK…GIIV.

To M.tuberculosis Rv1342c.

It localises to the cell membrane. This is an uncharacterized protein from Mycobacterium leprae (strain TN).